Reading from the N-terminus, the 463-residue chain is Chromogranin-A (463 aa).

Positions 1-18 (MRSTAVLALLLCAGQVFA) are cleaved as a signal peptide. Residues Cys-35 and Cys-56 are joined by a disulfide bond. The tract at residues 88–440 (KERAQQPLKQ…ANRRAEDQEL (353 aa)) is disordered. Residues 92–116 (QQPLKQQQPPKQQQQQQQQQQQEQQ) are compositionally biased toward low complexity. Ser-119 carries the phosphoserine modification. Over residues 134–160 (DAKHRDAAAEVPSRDTMEKRKDSDKGQ) the composition is skewed to basic and acidic residues. Positions 196-208 (TATNTQSPTSLPS) are enriched in polar residues. Phosphoserine is present on residues Ser-220, Ser-282, and Ser-308. Residues 301-310 (GKGELEHSQQ) show a composition bias toward basic and acidic residues. Position 329 is a glycine amide (Gly-329). Basic and acidic residues-rich tracts occupy residues 331–340 (KGRELEHKQE) and 348–375 (RLSREWEDKRWSRMDQLAKELTAEKRLE). Residues Ser-350 and Ser-383 each carry the phosphoserine modification. Met-384 bears the Methionine sulfoxide mark. The segment covering 409–437 (SSREDSVEARSDFEEKKEEEGSANRRAED) has biased composition (basic and acidic residues). Phosphoserine occurs at positions 410, 414, and 430. A glycan (O-linked (Xyl...) (chondroitin sulfate) serine) is linked at Ser-430. Gln-438 bears the Pyrrolidone carboxylic acid mark. Phosphoserine is present on Ser-444.

This sequence belongs to the chromogranin/secretogranin protein family. In terms of assembly, self-interacts; self-assembly is promoted in vitro by chondroitin sulfate attachment which occurs at mildly acidic pH conditions. Interacts with SCG3; this interaction is optimal in conditions mimicking the lumenal milieu of the trans-Golgi network, i.e. pH 5.5 and 10 mM Ca(+2). Interacts with ITPR1 in the secretory granules. O-glycosylated; contains chondroitin sulfate (CS). CS attachment is pH-dependent, being observed at mildly acidic conditions of pH 5 but not at neutral pH, and promotes self-assembly in vitro.

The protein localises to the cytoplasmic vesicle. Its subcellular location is the secretory vesicle. It is found in the neuronal dense core vesicle. It localises to the secreted. In terms of biological role, strongly inhibits glucose induced insulin release from the pancreas. Inhibits catecholamine release from chromaffin cells and noradrenergic neurons by acting as a non-competitive nicotinic cholinergic antagonist. Can induce mast cell migration, degranulation and production of cytokines and chemokines. Its function is as follows. Regulates granule biogenesis in endocrine cells by up-regulating the transcription of protease nexin 1 (SERPINE2) via a cAMP-PKA-SP1 pathway. This leads to inhibition of granule protein degradation in the Golgi complex which in turn promotes granule formation. Pyroglutaminated (pGlu)-serpinin exerts an antiapoptotic effect on cells exposed to oxidative stress. The chain is Chromogranin-A (Chga) from Mus musculus (Mouse).